Reading from the N-terminus, the 586-residue chain is Clathrin heavy chain linker domain-containing protein 1 (586 aa).

Residues Met-174–Gln-232 adopt a coiled-coil conformation.

The protein is Clathrin heavy chain linker domain-containing protein 1 (CLHC1) of Homo sapiens (Human).